The primary structure comprises 177 residues: Large ribosomal subunit protein uL6 (177 aa).

Residues 151–177 form a disordered region; sequence YRPPEPYKGKGIRYSDEHVVRKEAKKK. A compositionally biased stretch (basic and acidic residues) spans 155–177; that stretch reads EPYKGKGIRYSDEHVVRKEAKKK.

It belongs to the universal ribosomal protein uL6 family. As to quaternary structure, part of the 50S ribosomal subunit.

In terms of biological role, this protein binds to the 23S rRNA, and is important in its secondary structure. It is located near the subunit interface in the base of the L7/L12 stalk, and near the tRNA binding site of the peptidyltransferase center. This is Large ribosomal subunit protein uL6 from Psychrobacter sp. (strain PRwf-1).